The following is a 47-amino-acid chain: Protein RL9A (47 aa).

A helical transmembrane segment spans residues 27-47; it reads CMIIVIMIAISIWILTYVLFL.

Its subcellular location is the host membrane. This is Protein RL9A (RL9A) from Human cytomegalovirus (strain Merlin) (HHV-5).